The following is a 240-amino-acid chain: Probable septum site-determining protein MinC (240 aa).

The protein belongs to the MinC family. Interacts with MinD and FtsZ.

Functionally, cell division inhibitor that blocks the formation of polar Z ring septums. Rapidly oscillates between the poles of the cell to destabilize FtsZ filaments that have formed before they mature into polar Z rings. Prevents FtsZ polymerization. The protein is Probable septum site-determining protein MinC of Acinetobacter baumannii (strain ATCC 17978 / DSM 105126 / CIP 53.77 / LMG 1025 / NCDC KC755 / 5377).